The sequence spans 186 residues: dTTP/UTP pyrophosphatase (186 aa).

Catalysis depends on Asp66, which acts as the Proton acceptor.

This sequence belongs to the Maf family. YhdE subfamily. It depends on a divalent metal cation as a cofactor.

Its subcellular location is the cytoplasm. It carries out the reaction dTTP + H2O = dTMP + diphosphate + H(+). The catalysed reaction is UTP + H2O = UMP + diphosphate + H(+). Its function is as follows. Nucleoside triphosphate pyrophosphatase that hydrolyzes dTTP and UTP. May have a dual role in cell division arrest and in preventing the incorporation of modified nucleotides into cellular nucleic acids. This chain is dTTP/UTP pyrophosphatase, found in Pyrococcus horikoshii (strain ATCC 700860 / DSM 12428 / JCM 9974 / NBRC 100139 / OT-3).